We begin with the raw amino-acid sequence, 604 residues long: UvrABC system protein C (604 aa).

The GIY-YIG domain maps to 17-95 (AQPGVYRMLN…IKSLAPRYNI (79 aa)). In terms of domain architecture, UVR spans 204-239 (DEVLKTIEQKMFTASDQQDYEQAAQLRDQMQALRKI).

Belongs to the UvrC family. As to quaternary structure, interacts with UvrB in an incision complex.

It localises to the cytoplasm. The UvrABC repair system catalyzes the recognition and processing of DNA lesions. UvrC both incises the 5' and 3' sides of the lesion. The N-terminal half is responsible for the 3' incision and the C-terminal half is responsible for the 5' incision. This Nitrosomonas europaea (strain ATCC 19718 / CIP 103999 / KCTC 2705 / NBRC 14298) protein is UvrABC system protein C.